The primary structure comprises 60 residues: Metallothionein A (60 aa).

The interval 1-28 (MDPCECSKSGNCNCGGSCTCTNCSCKSC) is beta. A divalent metal cation is bound by residues Cys4, Cys6, Cys12, Cys14, Cys18, Cys20, Cys23, Cys25, Cys28, Cys32, Cys33, Cys35, Cys36, Cys40, Cys43, Cys47, Cys49, Cys54, Cys58, and Cys59. The tract at residues 29–60 (KKSCCPCCPSGCTKCASGCVCKGKTCDTSCCQ) is alpha.

The protein belongs to the metallothionein superfamily. Type 1 family.

Its function is as follows. Metallothioneins have a high content of cysteine residues that bind various heavy metals. The chain is Metallothionein A (mta) from Parachaenichthys charcoti (Charcot's dragonfish).